A 468-amino-acid chain; its full sequence is ATP synthase subunit beta (468 aa).

Position 155 to 162 (155 to 162 (GGAGVGKT)) interacts with ATP.

This sequence belongs to the ATPase alpha/beta chains family. In terms of assembly, F-type ATPases have 2 components, CF(1) - the catalytic core - and CF(0) - the membrane proton channel. CF(1) has five subunits: alpha(3), beta(3), gamma(1), delta(1), epsilon(1). CF(0) has three main subunits: a(1), b(2) and c(9-12). The alpha and beta chains form an alternating ring which encloses part of the gamma chain. CF(1) is attached to CF(0) by a central stalk formed by the gamma and epsilon chains, while a peripheral stalk is formed by the delta and b chains.

Its subcellular location is the cell membrane. It catalyses the reaction ATP + H2O + 4 H(+)(in) = ADP + phosphate + 5 H(+)(out). Functionally, produces ATP from ADP in the presence of a proton gradient across the membrane. The catalytic sites are hosted primarily by the beta subunits. The protein is ATP synthase subunit beta of Streptococcus agalactiae serotype III (strain NEM316).